We begin with the raw amino-acid sequence, 228 residues long: Ribose-5-phosphate isomerase A (228 aa).

Substrate-binding positions include threonine 32 to threonine 35, aspartate 85 to aspartate 88, and lysine 98 to glycine 101. Glutamate 107 (proton acceptor) is an active-site residue. Residue lysine 125 coordinates substrate.

It belongs to the ribose 5-phosphate isomerase family. Homodimer.

The catalysed reaction is aldehydo-D-ribose 5-phosphate = D-ribulose 5-phosphate. It functions in the pathway carbohydrate degradation; pentose phosphate pathway; D-ribose 5-phosphate from D-ribulose 5-phosphate (non-oxidative stage): step 1/1. Catalyzes the reversible conversion of ribose-5-phosphate to ribulose 5-phosphate. This chain is Ribose-5-phosphate isomerase A, found in Ralstonia nicotianae (strain ATCC BAA-1114 / GMI1000) (Ralstonia solanacearum).